The primary structure comprises 100 residues: NADH-quinone oxidoreductase subunit K 2 (100 aa).

Transmembrane regions (helical) follow at residues 4–24 (LWWF…GVLL), 28–48 (ILVV…NFIA), and 60–80 (IFAI…LGIL).

It belongs to the complex I subunit 4L family. In terms of assembly, NDH-1 is composed of 14 different subunits. Subunits NuoA, H, J, K, L, M, N constitute the membrane sector of the complex.

It is found in the cell inner membrane. It catalyses the reaction a quinone + NADH + 5 H(+)(in) = a quinol + NAD(+) + 4 H(+)(out). Functionally, NDH-1 shuttles electrons from NADH, via FMN and iron-sulfur (Fe-S) centers, to quinones in the respiratory chain. The immediate electron acceptor for the enzyme in this species is believed to be ubiquinone. Couples the redox reaction to proton translocation (for every two electrons transferred, four hydrogen ions are translocated across the cytoplasmic membrane), and thus conserves the redox energy in a proton gradient. The polypeptide is NADH-quinone oxidoreductase subunit K 2 (Rhizobium etli (strain CIAT 652)).